A 178-amino-acid polypeptide reads, in one-letter code: uncharacterized protein (178 aa).

An N-terminal signal peptide occupies residues 1-19 (MKKNIHILGASGVGTSTLG).

This is an uncharacterized protein from Bacillus subtilis (strain 168).